We begin with the raw amino-acid sequence, 316 residues long: Malate dehydrogenase (316 aa).

NAD(+) contacts are provided by residues 12-17 and Asp36; that span reads GAGNIG. Residues Arg85 and Arg91 each coordinate substrate. NAD(+)-binding positions include Asn98 and 121–123; that span reads VTN. Substrate-binding residues include Asn123 and Arg154. His178 acts as the Proton acceptor in catalysis.

The protein belongs to the LDH/MDH superfamily. MDH type 3 family.

The enzyme catalyses (S)-malate + NAD(+) = oxaloacetate + NADH + H(+). Its function is as follows. Catalyzes the reversible oxidation of malate to oxaloacetate. This chain is Malate dehydrogenase, found in Wolbachia sp. subsp. Brugia malayi (strain TRS).